The chain runs to 208 residues: Protein-L-isoaspartate O-methyltransferase (208 aa).

Residue Ser-59 is part of the active site.

It belongs to the methyltransferase superfamily. L-isoaspartyl/D-aspartyl protein methyltransferase family.

The protein resides in the cytoplasm. It carries out the reaction [protein]-L-isoaspartate + S-adenosyl-L-methionine = [protein]-L-isoaspartate alpha-methyl ester + S-adenosyl-L-homocysteine. In terms of biological role, catalyzes the methyl esterification of L-isoaspartyl residues in peptides and proteins that result from spontaneous decomposition of normal L-aspartyl and L-asparaginyl residues. It plays a role in the repair and/or degradation of damaged proteins. The chain is Protein-L-isoaspartate O-methyltransferase from Klebsiella pneumoniae subsp. pneumoniae (strain ATCC 700721 / MGH 78578).